The sequence spans 341 residues: Ribosomal RNA small subunit methyltransferase H (341 aa).

S-adenosyl-L-methionine is bound by residues 47–49, Asp-64, Phe-91, Asp-109, and Gln-116; that span reads GGY.

It belongs to the methyltransferase superfamily. RsmH family.

It is found in the cytoplasm. It carries out the reaction cytidine(1402) in 16S rRNA + S-adenosyl-L-methionine = N(4)-methylcytidine(1402) in 16S rRNA + S-adenosyl-L-homocysteine + H(+). Its function is as follows. Specifically methylates the N4 position of cytidine in position 1402 (C1402) of 16S rRNA. In Rhizobium johnstonii (strain DSM 114642 / LMG 32736 / 3841) (Rhizobium leguminosarum bv. viciae), this protein is Ribosomal RNA small subunit methyltransferase H.